The primary structure comprises 75 residues: Small ribosomal subunit protein bS18 (75 aa).

Belongs to the bacterial ribosomal protein bS18 family. As to quaternary structure, part of the 30S ribosomal subunit. Forms a tight heterodimer with protein bS6.

Binds as a heterodimer with protein bS6 to the central domain of the 16S rRNA, where it helps stabilize the platform of the 30S subunit. This Pasteurella multocida (strain Pm70) protein is Small ribosomal subunit protein bS18.